The chain runs to 445 residues: AVMGRNLALNIESRGYTVSVFNRSREKTEEVIAENPGKKLVPYYTVQEFVESLETPRRILLMVKAGAGTDSAIDSLKPYLDKGDIIIDGGNTFFQDTIRRNRELSEEGFNFIGTGVSGGEEGALKGPSIMPGGQKEAYELVAPILKQIAAVAEDGEPCVTYIGADGAGHYVKMVHNGIEYGDMQLIAEAYSLLKGGLNLSNEELATTFSEWNKGELSSYLIDITKDIFTKKDEEGKYLVDVILDEAANKGTGKWTSQSSLDLGEPLSLITESVFARYISSLKTQRVAASKVLTGPQAQPAGDKAEFIEKVRRALYLGKIVSYAQGFSQLRAASDEYNWDLNYGEIAKIFRAGCIIRAQFLQKITDAYAENPAIANLLLAPYFKQIADDYQQALRDVVSYAVQNGIPVPTFSAAVAYYDSYRAAVLPANLIQAQRDYFGAHTYKRT.

Residues 1 to 4 (AVMG), 22 to 24 (NRS), 63 to 65 (VKA), and asparagine 91 each bind NADP(+). Residues asparagine 91 and 117-119 (SGG) each bind substrate. Lysine 172 (proton acceptor) is an active-site residue. 175–176 (HN) provides a ligand contact to substrate. Residue glutamate 179 is the Proton donor of the active site. Substrate-binding residues include tyrosine 180, lysine 249, arginine 276, arginine 434, and histidine 440.

It belongs to the 6-phosphogluconate dehydrogenase family. As to quaternary structure, homodimer.

It carries out the reaction 6-phospho-D-gluconate + NADP(+) = D-ribulose 5-phosphate + CO2 + NADPH. It functions in the pathway carbohydrate degradation; pentose phosphate pathway; D-ribulose 5-phosphate from D-glucose 6-phosphate (oxidative stage): step 3/3. Catalyzes the oxidative decarboxylation of 6-phosphogluconate to ribulose 5-phosphate and CO(2), with concomitant reduction of NADP to NADPH. This chain is 6-phosphogluconate dehydrogenase, decarboxylating (gnd), found in Citrobacter amalonaticus.